Reading from the N-terminus, the 1184-residue chain is MAAIKTWVFSFLVLEVTTVLGRQTMLAQSVRRVQPVKRTPKTLAKPADSQESPGEWTTWFNIDHPGGQGDYERLDAIRFYYGERVCARPLRLEARTTDWMPAGSTGQVVHGSPREGFWCLNREQRPGQNCSNYTVRFLCPPGSLRGDAEHIWSSWSPWSKCSAACGHTGVQTRTRTCLAQTVSLCSEATEEGQLCMSQACTACDLTCPMGQVNADCDACMCQDFMLHGAISLPGGGPAPGAAVYLLAKAPKMLTRTDSSGRFRVPGLCPDGKTILKITKTKFAPIMITMPKTSLKSATINAEFVRAETPYIVMNPEMKARRAGQSVSLCCKATGKPSPDKYFWYHNNTLLDPSLYKHESKLVLRNLQQDQAGEYFCKAQSDAGAVKSKVTQLTVIAHDETPCNPTPESYLIRLPHDCFQNASNSFYYDVGRCPIKTCAGQQDNGIRCRDAVENCCGISRTEEREIQCSGYTLPTKVAVECSCQRCAETRSIVRGRVTATDNGEPMRFGHVYMGNNRVSMTGYKGTFTLHIPQDTERLVLTFVDRLQKFVNTTKVLPFNKKGSAVFHEIKMLRQKEPITLEAMETNIIPLGEVIGEDPVAELEIPSKSFYRQNGEPFTGKVKASVTFLDPRNISTATAAQSDLNFINDEGDTFPLRTYGMFSVDFRDEATSESLNAGKVKVHLDSTQVKMPEHVPAMKLWSLNPDTGLWEEEGDFKFESQRRNKREERTFLVGNMEIRERRLFNLDVPESRRCFIKVRTYRSERFLPSEQIQGVVVSVINLEPRTGFSSNPRAWGRFDSVITGPNGACLPAFCDDQSPDAYSVYVLASLSGEELEAVESSPKFNPNAIGVPQPYLNKLKYRRTDHEDPRVKKTAFQISMAKPRPNSAEESNGPIYAFENLRACEEAPPSAAHFRFYQIEGDRYDYNTVPFNEDDPMSWTEDYLAWWPKPMEFRACYIKVKIVGPLEVNVRSRNMGGTHRQTVGKLYGIRDVKSTRDRDQPNVSSACLEFKCSGMLYDQDRVDRTLVKVIPQGSCHRASVNSMLHEYLVNHLPLAVNNDTSEYTMLAPLDPLGHNYGIYTVTDQDPRTAKEIALGRCFDGTSDGSSRIMKSNVGVALTFNCAERQVGRQSAFQYLQSTPARSPATGTVQGRVPAMRQQRASRGGLRRRGSMAPLRFSGVAQQPLSN.

An N-terminal signal peptide occupies residues 1–21 (MAAIKTWVFSFLVLEVTTVLG). N-linked (GlcNAc...) asparagine glycans are attached at residues Asn-129 and Asn-132. Positions 150–201 (HIWSSWSPWSKCSAACGHTGVQTRTRTCLAQTVSLCSEATEEGQLCMSQACT) constitute a TSP type-1 domain. 4 cysteine pairs are disulfide-bonded: Cys-161–Cys-195, Cys-165–Cys-200, Cys-177–Cys-185, and Cys-330–Cys-376. The 85-residue stretch at 309–393 (PYIVMNPEMK…AVKSKVTQLT (85 aa)) folds into the Ig-like C2-type domain. Asn-346, Asn-420, Asn-550, Asn-631, Asn-1000, and Asn-1056 each carry an N-linked (GlcNAc...) asparagine glycan. The disordered stretch occupies residues 1138 to 1184 (ARSPATGTVQGRVPAMRQQRASRGGLRRRGSMAPLRFSGVAQQPLSN).

As to quaternary structure, monomer. Interacts with TGFB1. Post-translationally, cleaved into 2 chains possibly by a furin-like protease upon or preceding secretion. Expressed in articular and meniscal cartilage (at protein level). Primarily localizes to the superficial and intermediate zones of articular cartilage (at protein level).

The protein localises to the secreted. The protein resides in the extracellular space. It localises to the extracellular matrix. In terms of biological role, probably plays a role in cartilage scaffolding. May act by antagonizing TGF-beta1 (TGFB1) and IGF1 functions. Has the ability to suppress IGF1-induced proliferation and sulfated proteoglycan synthesis, and inhibits ligand-induced IGF1R autophosphorylation. May inhibit TGFB1-mediated induction of cartilage matrix genes via its interaction with TGFB1. Overexpression may lead to impair chondrocyte growth and matrix repair and indirectly promote inorganic pyrophosphate (PPi) supersaturation in aging and osteoarthritis cartilage. This Mus musculus (Mouse) protein is Cartilage intermediate layer protein 1 (Cilp).